Reading from the N-terminus, the 148-residue chain is Azurin (148 aa).

An N-terminal signal peptide occupies residues 1 to 20 (MLRKLAAVSLLSLLSAPLLA). The 128-residue stretch at 21-148 (AECSVDIQGN…ALMKGTLTLK (128 aa)) folds into the Plastocyanin-like domain. The cysteines at positions 23 and 46 are disulfide-linked. The Cu cation site is built by His-66, Cys-132, His-137, and Met-141.

It is found in the periplasm. Its function is as follows. Transfers electrons from cytochrome c551 to cytochrome oxidase. The polypeptide is Azurin (azu) (Pseudomonas aeruginosa (strain ATCC 15692 / DSM 22644 / CIP 104116 / JCM 14847 / LMG 12228 / 1C / PRS 101 / PAO1)).